Consider the following 452-residue polypeptide: Transcription factor AP-2-delta (452 aa).

Residue S239 is modified to Phosphoserine; by PKA. The H-S-H (helix-span-helix), dimerization stretch occupies residues 280 to 410 (RRKAANVTLL…VLSEMLNYLE (131 aa)). Positions 416–452 (KNGGAADSGQGHANSEKAPLRKASEAAVKEGKTEKTD) are disordered. Positions 429–452 (NSEKAPLRKASEAAVKEGKTEKTD) are enriched in basic and acidic residues.

The protein belongs to the AP-2 family. As to quaternary structure, binds DNA as a dimer. Can form homodimers or heterodimers with other AP-2 family members. Expressed in both embryonic and newborn brain.

It is found in the nucleus. Its function is as follows. Sequence-specific DNA-binding protein that interacts with inducible viral and cellular enhancer elements to regulate transcription of selected genes. AP-2 factors bind to the consensus sequence 5'-GCCNNNGGC-3' and activate genes involved in a large spectrum of important biological functions including proper eye, face, body wall, limb and neural tube development. They also suppress a number of genes including MCAM/MUC18, C/EBP alpha and MYC. This is Transcription factor AP-2-delta (Tfap2d) from Mus musculus (Mouse).